Reading from the N-terminus, the 82-residue chain is uncharacterized protein (82 aa).

Transmembrane regions (helical) follow at residues 1-21, 22-42, and 62-82; these read MSAS…SVST, VLLG…LAAF, and WRLL…LTLL.

The protein localises to the cell membrane. This is an uncharacterized protein from Stutzerimonas stutzeri (Pseudomonas stutzeri).